A 619-amino-acid polypeptide reads, in one-letter code: Long-chain fatty acid transport protein 6 (619 aa).

The next 2 membrane-spanning stretches (helical) occupy residues 22 to 42 (LLFP…LIII) and 119 to 139 (VHVW…NTNI). AMP is bound at residue 221 to 232 (YIFTSGTTGLPK).

It belongs to the ATP-dependent AMP-binding enzyme family. Strongly expressed in heart and localizes to cardiac myocytes. Expressed at moderate levels in placenta, testis, and adrenal glands. Expressed at very low levels in kidney, bladder and uterus.

The protein localises to the cell membrane. It localises to the sarcolemma. It catalyses the reaction a fatty acid(in) = a fatty acid(out). The catalysed reaction is hexadecanoate(out) = hexadecanoate(in). The enzyme catalyses (9Z)-octadecenoate(out) = (9Z)-octadecenoate(in). It carries out the reaction (9Z,12Z)-octadecadienoate(out) = (9Z,12Z)-octadecadienoate(in). It catalyses the reaction a very long-chain fatty acid + ATP + CoA = a very long-chain fatty acyl-CoA + AMP + diphosphate. The catalysed reaction is tetracosanoate + ATP + CoA = tetracosanoyl-CoA + AMP + diphosphate. The enzyme catalyses a long-chain fatty acid + ATP + CoA = a long-chain fatty acyl-CoA + AMP + diphosphate. It carries out the reaction (5Z,8Z,11Z,14Z)-eicosatetraenoate + ATP + CoA = (5Z,8Z,11Z,14Z)-eicosatetraenoyl-CoA + AMP + diphosphate. It catalyses the reaction (9Z)-octadecenoate + ATP + CoA = (9Z)-octadecenoyl-CoA + AMP + diphosphate. Its function is as follows. Mediates the import of long-chain fatty acids (LCFA) into the cell by facilitating their transport at the plasma membrane. Also functions as an acyl-CoA ligase catalyzing the ATP-dependent formation of fatty acyl-CoA using LCFA and very-long-chain fatty acids (VLCFA) as substrates. Plays a pivotal role in regulating available LCFA substrates from exogenous sources in tissues undergoing high levels of beta-oxidation such as the heart. The sequence is that of Long-chain fatty acid transport protein 6 (SLC27A6) from Homo sapiens (Human).